The following is a 592-amino-acid chain: Probable oxidoreductase EphD (592 aa).

Residues Pro30 to His286 enclose the AB hydrolase-1 domain. Ser461 is a binding site for substrate. Tyr474 functions as the Proton acceptor in the catalytic mechanism.

This sequence belongs to the short-chain dehydrogenases/reductases (SDR) family.

The polypeptide is Probable oxidoreductase EphD (ephD) (Mycobacterium bovis (strain ATCC BAA-935 / AF2122/97)).